The following is a 457-amino-acid chain: Proton-translocating ferredoxin:NAD(+) oxidoreductase complex subunit C (457 aa).

4Fe-4S ferredoxin-type domains are found at residues 353–386 (TKND…MLSI) and 396–427 (AKEE…YIRY). 8 residues coordinate [4Fe-4S] cluster: C365, C368, C371, C375, C405, C408, C411, and C415. The segment at 433-457 (RAAGEREKAKAAKAKEKKEKEEVLK) is disordered.

This sequence belongs to the 4Fe4S bacterial-type ferredoxin family. RnfC subfamily. In terms of assembly, the complex is composed of six subunits: RnfA, RnfB, RnfC, RnfD, RnfE and RnfG. [4Fe-4S] cluster serves as cofactor.

The protein localises to the cell membrane. Part of a membrane-bound complex that couples electron transfer with translocation of ions across the membrane. Couples electron transfer from reduced ferredoxin to NAD(+) with translocation of H(+) out of the cell. Essential for energy conservation during autotrophic growth. Contributes to ATP synthesis during heterotrophic growth. The protein is Proton-translocating ferredoxin:NAD(+) oxidoreductase complex subunit C of Clostridium ljungdahlii (strain ATCC 55383 / DSM 13528 / PETC).